A 363-amino-acid chain; its full sequence is Chemerin-like receptor 1 (363 aa).

Over 1-39 (MDFEDYNSTYEDSYTDDFDTIVALEEFSPLEGRVVRIFL) the chain is Extracellular. N-linked (GlcNAc...) asparagine glycosylation is present at Asn7. A helical transmembrane segment spans residues 40-60 (VVVYSIICFLGILGNGLVIVI). Residues 61–71 (ATFKMKKTVNT) lie on the Cytoplasmic side of the membrane. A helical transmembrane segment spans residues 72–92 (VWFLNLAVADFLFNVFLPIHI). Residues 93 to 109 (AYAAMDYHWVFGTAMCK) are Extracellular-facing. A disulfide bridge links Cys108 with Cys185. The helical transmembrane segment at 110-130 (ISNFLLIHNMYTSVFLLTVIS) threads the bilayer. The Cytoplasmic portion of the chain corresponds to 131 to 152 (FDRCISVLLPVWSQNHRSIRLA). The helical transmembrane segment at 153-173 (YMACVVIWVLAFFLSSPSLVF) threads the bilayer. Residues 174–220 (RDTAHLHGKISCFNNFSLSATSSSSWPTHPQMDTVGFGRQMVVTITR) are Extracellular-facing. N-linked (GlcNAc...) asparagine glycosylation occurs at Asn188. The helical transmembrane segment at 221–241 (FLCGFLVPVLIISACYFTIVY) threads the bilayer. The Cytoplasmic segment spans residues 242-256 (KLRRNRLAKTKKPFK). The chain crosses the membrane as a helical span at residues 257 to 277 (IIVTIIITFFLCWCPYHTLYL). The Extracellular portion of the chain corresponds to 278-283 (LELHHR). The helical transmembrane segment at 284-304 (AMPGSVFSLGVPLATAIAIAN) threads the bilayer. At 305-363 (SCMNPILYVFMGQDFKKFKVALFSRLVNALSEDTGHSSYPSHRSFTKMSSMNERETSML) the chain is on the cytoplasmic side. Ser335 carries the phosphoserine modification. The tract at residues 337–363 (DTGHSSYPSHRSFTKMSSMNERETSML) is disordered. Thr338 bears the Phosphothreonine mark. A compositionally biased stretch (polar residues) spans 340–355 (HSSYPSHRSFTKMSSM). 3 positions are modified to phosphoserine: Ser345, Ser348, and Ser354.

The protein belongs to the chemokine-like receptor (CMKLR) family. In terms of tissue distribution, predominantly expressed in spleen and temperately in adipose tissue.

It is found in the cell membrane. Its function is as follows. Receptor for the chemoattractant adipokine chemerin/RARRES2 and for the omega-3 fatty acid derived molecule resolvin E1. Interaction with RARRES2 initiates activation of G proteins G(i)/G(o) and beta-arrestin pathways inducing cellular responses via second messenger pathways such as intracellular calcium mobilization, phosphorylation of MAP kinases MAPK1/MAPK3 (ERK1/2), TYRO3, MAPK14/P38MAPK and PI3K leading to multifunctional effects, like, reduction of immune responses, enhancing of adipogenesis and angionesis. Resolvin E1 down-regulates cytokine production in macrophages by reducing the activation of MAPK1/3 (ERK1/2) and NF-kappa-B. Positively regulates adipogenesis and adipocyte metabolism. This is Chemerin-like receptor 1 (CMLKR1) from Sus scrofa (Pig).